Reading from the N-terminus, the 267-residue chain is Phosphoinositide-3-kinase-interacting protein 1 (267 aa).

A signal peptide spans M1–G21. The Extracellular portion of the chain corresponds to S22–T172. A Kringle domain is found at G24–C101. Intrachain disulfides connect C25–C101, C46–C82, and C70–C96. The span at P91–C101 shows a compositional bias: basic and acidic residues. Residues P91 to E122 form a disordered region. Residues L173–V193 form a helical membrane-spanning segment. Over L194–A267 the chain is Cytoplasmic.

It localises to the cell membrane. Negative regulator of hepatic phosphatidylinositol 3-kinase (PI3K) activity. The polypeptide is Phosphoinositide-3-kinase-interacting protein 1 (Pik3ip1) (Rattus norvegicus (Rat)).